We begin with the raw amino-acid sequence, 598 residues long: UvrABC system protein C (598 aa).

Residues 14-91 form the GIY-YIG domain; the sequence is DSPGCYLHKD…IQKNMPKYNI (78 aa). The 36-residue stretch at 196 to 231 folds into the UVR domain; sequence DKIIEDLRSKMLAASEEMAFERAAEYRDLISGIATM.

The protein belongs to the UvrC family. As to quaternary structure, interacts with UvrB in an incision complex.

The protein resides in the cytoplasm. In terms of biological role, the UvrABC repair system catalyzes the recognition and processing of DNA lesions. UvrC both incises the 5' and 3' sides of the lesion. The N-terminal half is responsible for the 3' incision and the C-terminal half is responsible for the 5' incision. This chain is UvrABC system protein C, found in Streptococcus pyogenes serotype M18 (strain MGAS8232).